A 788-amino-acid chain; its full sequence is Cap-specific mRNA (nucleoside-2'-O-)-methyltransferase 1 (788 aa).

The region spanning 25 to 71 (YSNKAMEMMKKMGYENDKGLGKSNQGRLEPIIAVQQDGRRGFGLKLD) is the G-patch domain. Substrate is bound by residues 143-147 (KTVFD) and R158. One can recognise a RrmJ-type SAM-dependent 2'-O-MTase domain in the interval 171–384 (IFLNRAAVKM…ERYLVCKYKR (214 aa)). N174 serves as a coordination point for S-adenosyl-L-methionine. K179 is a catalytic residue. Position 215 to 221 (215 to 221 (CAGPGGF)) interacts with S-adenosyl-L-methionine. D298 is a catalytic residue. 308–310 (NIQ) contributes to the substrate binding site. The active-site Proton acceptor is K338. N373 contacts substrate.

Interacts (via C-terminus) with r2d2 (via C-terminus).

It localises to the nucleus. It is found in the cytoplasm. The catalysed reaction is a 5'-end (N(7)-methyl 5'-triphosphoguanosine)-ribonucleoside in mRNA + S-adenosyl-L-methionine = a 5'-end (N(7)-methyl 5'-triphosphoguanosine)-(2'-O-methyl-ribonucleoside) in mRNA + S-adenosyl-L-homocysteine + H(+). Its function is as follows. S-adenosyl-L-methionine-dependent methyltransferase that mediates mRNA cap1 2'-O-ribose methylation to the 5'-cap structure of mRNAs. Methylates the ribose of the first nucleotide of a m(7)GpppG-capped mRNA to produce m(7)GpppNmp (cap1). Positively regulates the Ago2-dependent small RNA pathway, with roles in both siRNA biogenesis and RISC assembly. Involved in facilitating conversion of pre-RISC into holo-RISC, possibly by promoting the unwinding of Ago2-bound siRNA duplexes and thus the retention of the guide strand in holo-RISC. This Drosophila melanogaster (Fruit fly) protein is Cap-specific mRNA (nucleoside-2'-O-)-methyltransferase 1.